Here is an 811-residue protein sequence, read N- to C-terminus: Ribosome biogenesis protein ERB1 (811 aa).

A compositionally biased stretch (polar residues) spans 1 to 11 (MARNSKATDTP). A disordered region spans residues 1–138 (MARNSKATDT…VHTKFSDGRP (138 aa)). Positions 27–96 (EDAEESSSDE…LSDVDSEEFS (70 aa)) are enriched in acidic residues. Residues 104–121 (ASITDKLSGTKIRSYSNA) show a composition bias toward polar residues. Residues 128–138 (EVHTKFSDGRP) are compositionally biased toward basic and acidic residues. The tract at residues 270–386 (RFVPSKHEAK…LRKVPGYQEG (117 aa)) is required for interaction with NOP7. Positions 386 to 422 (GLRERFERCLDLYLAPRTRHNKLNIDPDSLIPELPSP) are required for interaction with YTM1. WD repeat units follow at residues 438-477 (GHTE…QVYK) and 485-525 (NTDD…FDIE). The disordered stretch occupies residues 547-566 (TKNSNIKVNSDDEDEEVEKA). 5 WD repeats span residues 595 to 637 (QCRK…SQSP), 640 to 678 (KSKG…LVKK), 681 to 720 (PGAR…TPYK), 724 to 764 (YHDK…DLMT), and 780 to 811 (INSL…LWTT).

Belongs to the WD repeat BOP1/ERB1 family. Component of the NOP7 complex, composed of ERB1, NOP7 and YTM1. The complex is held together by ERB1, which interacts with NOP7 via its N-terminal domain and with YTM1 via a high-affinity interaction between the seven-bladed beta-propeller domains of the 2 proteins. The NOP7 complex associates with the 66S pre-ribosome.

It is found in the nucleus. It localises to the nucleolus. Its subcellular location is the nucleoplasm. Functionally, component of the NOP7 complex, which is required for maturation of the 25S and 5.8S ribosomal RNAs and formation of the 60S ribosome. The chain is Ribosome biogenesis protein ERB1 from Debaryomyces hansenii (strain ATCC 36239 / CBS 767 / BCRC 21394 / JCM 1990 / NBRC 0083 / IGC 2968) (Yeast).